The chain runs to 205 residues: Imidazole glycerol phosphate synthase subunit HisH (205 aa).

Positions 1–205 (MIALVDYGGG…FFKMALGDKK (205 aa)) constitute a Glutamine amidotransferase type-1 domain. C79 (nucleophile) is an active-site residue. Catalysis depends on residues H181 and E183.

As to quaternary structure, heterodimer of HisH and HisF.

The protein resides in the cytoplasm. It carries out the reaction 5-[(5-phospho-1-deoxy-D-ribulos-1-ylimino)methylamino]-1-(5-phospho-beta-D-ribosyl)imidazole-4-carboxamide + L-glutamine = D-erythro-1-(imidazol-4-yl)glycerol 3-phosphate + 5-amino-1-(5-phospho-beta-D-ribosyl)imidazole-4-carboxamide + L-glutamate + H(+). The catalysed reaction is L-glutamine + H2O = L-glutamate + NH4(+). It participates in amino-acid biosynthesis; L-histidine biosynthesis; L-histidine from 5-phospho-alpha-D-ribose 1-diphosphate: step 5/9. Its function is as follows. IGPS catalyzes the conversion of PRFAR and glutamine to IGP, AICAR and glutamate. The HisH subunit catalyzes the hydrolysis of glutamine to glutamate and ammonia as part of the synthesis of IGP and AICAR. The resulting ammonia molecule is channeled to the active site of HisF. In Dehalococcoides mccartyi (strain CBDB1), this protein is Imidazole glycerol phosphate synthase subunit HisH.